Consider the following 185-residue polypeptide: ATP synthase subunit b 2 (185 aa).

A disordered region spans residues 1–23; the sequence is MAEGHGDAKGATAHTAADGGHKA. The segment covering 9–18 has biased composition (low complexity); that stretch reads KGATAHTAAD. A helical transmembrane segment spans residues 32-51; that stretch reads TFASQLVSLTIAFVALYLIV.

It belongs to the ATPase B chain family. As to quaternary structure, F-type ATPases have 2 components, F(1) - the catalytic core - and F(0) - the membrane proton channel. F(1) has five subunits: alpha(3), beta(3), gamma(1), delta(1), epsilon(1). F(0) has three main subunits: a(1), b(2) and c(10-14). The alpha and beta chains form an alternating ring which encloses part of the gamma chain. F(1) is attached to F(0) by a central stalk formed by the gamma and epsilon chains, while a peripheral stalk is formed by the delta and b chains.

The protein localises to the cell inner membrane. In terms of biological role, f(1)F(0) ATP synthase produces ATP from ADP in the presence of a proton or sodium gradient. F-type ATPases consist of two structural domains, F(1) containing the extramembraneous catalytic core and F(0) containing the membrane proton channel, linked together by a central stalk and a peripheral stalk. During catalysis, ATP synthesis in the catalytic domain of F(1) is coupled via a rotary mechanism of the central stalk subunits to proton translocation. Component of the F(0) channel, it forms part of the peripheral stalk, linking F(1) to F(0). The b'-subunit is a diverged and duplicated form of b found in plants and photosynthetic bacteria. In Rhodopseudomonas palustris (strain HaA2), this protein is ATP synthase subunit b 2 (atpF2).